A 93-amino-acid chain; its full sequence is Small ribosomal subunit protein uS15c (93 aa).

The protein belongs to the universal ribosomal protein uS15 family. As to quaternary structure, part of the 30S ribosomal subunit.

The protein resides in the plastid. It is found in the chloroplast. The protein is Small ribosomal subunit protein uS15c (rps15) of Jasminum nudiflorum (Winter jasmine).